The following is a 183-amino-acid chain: uncharacterized protein (183 aa).

4 consecutive transmembrane segments (helical) span residues 26–48, 72–91, 104–121, and 125–147; these read FVAI…IIFY, LLVR…KVFI, IIEA…LIVF, and FTFW…YVLL.

The protein localises to the cell membrane. This is an uncharacterized protein from Aquifex aeolicus (strain VF5).